The sequence spans 347 residues: Tsukushi (347 aa).

The N-terminal stretch at 1–19 (MASLLCLFFSLLGLAAIGA) is a signal peptide. The 42-residue stretch at 20 to 61 (VKNCHPQCRCEVETFGLFDSFSLTKVDCSRIGPGNTPVPIPL) folds into the LRRNT domain. LRR repeat units lie at residues 62–83 (DTSH…MLSG), 88–109 (TLVS…AFSK), 112–133 (YLET…CFTG), 135–156 (PLVE…LFTT), 160–175 (DLPI…LTSI), 185–205 (YIKS…LNGI), 206–227 (PLQY…AFDS), 230–252 (ELVH…AFRS), 255–277 (NLQA…VFSG), and 280–301 (SLQE…VFMQ). N-linked (GlcNAc...) asparagine glycosylation is present at N285.

In terms of assembly, forms a ternary complex with chordin/CHRD and BMP4.

The protein resides in the secreted. Contributes to various developmental events through its interactions with multiple signaling pathways. Dorsalizing factor which functions as an inhibitor of bone morphogenetic proteins during gastrulation. The sequence is that of Tsukushi (tsku) from Danio rerio (Zebrafish).